The chain runs to 188 residues: GTP cyclohydrolase 1 (188 aa).

3 residues coordinate Zn(2+): Cys-76, His-79, and Cys-148.

This sequence belongs to the GTP cyclohydrolase I family. As to quaternary structure, toroid-shaped homodecamer, composed of two pentamers of five dimers.

It carries out the reaction GTP + H2O = 7,8-dihydroneopterin 3'-triphosphate + formate + H(+). Its pathway is cofactor biosynthesis; 7,8-dihydroneopterin triphosphate biosynthesis; 7,8-dihydroneopterin triphosphate from GTP: step 1/1. The chain is GTP cyclohydrolase 1 from Caldanaerobacter subterraneus subsp. tengcongensis (strain DSM 15242 / JCM 11007 / NBRC 100824 / MB4) (Thermoanaerobacter tengcongensis).